Consider the following 489-residue polypeptide: ATF/CREB activator 1 (489 aa).

The bZIP domain occupies 384–447; it reads AWKRARLLER…QKMKKISRLH (64 aa). The basic motif stretch occupies residues 386–406; sequence KRARLLERNRIAASKCRQRKK. Positions 412-419 are leucine-zipper; sequence LQREFDQI.

It belongs to the bZIP family.

It is found in the nucleus. Its function is as follows. Transcriptional activator of promoters containing ATF/CREB sites. Can independently stimulate transcription through ATF/CREB sites. Important for a variety of biological functions including growth on non-optimal carbon sources. Regulates the expression of COS8. Has efficient silencing blocking activities. In Saccharomyces cerevisiae (strain ATCC 204508 / S288c) (Baker's yeast), this protein is ATF/CREB activator 1 (ACA1).